The chain runs to 715 residues: MTTTSAFMLNVRLDNVAVVAIDVPGEKVNTLKAEFAAQVRAILKQIRENKALQGVVFISAKADNFIAGADINMIGHCQNAQEAETLARQGQQLMAEIQALPVPVIAAIHGACLGGGLEMALACHRRICTDDVKTVLGLPEVQLGLLPGSGGTQRLPRLVGVSTALDMILTGKQLRARQALKAGLVDDVVPQTILLEAAVELAKKERLAQRTLPVRERILAGPLGRALLFRLVRKKTAQKTQGNYPATERIIDVIETGLAQGSSSGYDAEARAFGELAMTPQSQALRAVFFASTEVKKDPGSDAPPGPLNSVGILGGGLMGGGIAWVTACKGGLPVRIKDINTQGINHALKYSWDLLETKVRRRHIKANERDKQLALISGSTDYRGFSHRDLVIEAVFEDLPLKQQMVAEVEQNCAAHTIFASNTSSLPIGDIAANAARPEQVIGLHFFSPVEKMPLVEVIPHASTSAQTIATTVKLAKKQGKTPIVVSDKAGFYVNRILAPYINEAIRMLTEGERVEHIDAALVKFGFPVGPIQLLDEVGIDTGTKIIPVLEAAYGERFSAPANVVASILNDDRKGRKNGRGFYLYGEKGRKSKKQVDPAIYKLIGVQGQSRLSAQQVAERCVMLMLNEAARCFDEKVIRSARDGDIGAVFGIGFPPFLGGPFRYMDALGPGEMVATLQRLAALYGPRYAPCEQLVRMAERREHFWTNGETDQGN.

The enoyl-CoA hydratase stretch occupies residues 1–190; that stretch reads MTTTSAFMLN…KAGLVDDVVP (190 aa). Residues 306 to 715 form a 3-hydroxyacyl-CoA dehydrogenase region; sequence GPLNSVGILG…WTNGETDQGN (410 aa).

This sequence in the N-terminal section; belongs to the enoyl-CoA hydratase/isomerase family. It in the central section; belongs to the 3-hydroxyacyl-CoA dehydrogenase family. Heterotetramer of two alpha chains (FadJ) and two beta chains (FadI).

The protein resides in the cytoplasm. It catalyses the reaction a (3S)-3-hydroxyacyl-CoA = a (2E)-enoyl-CoA + H2O. It carries out the reaction a 4-saturated-(3S)-3-hydroxyacyl-CoA = a (3E)-enoyl-CoA + H2O. The enzyme catalyses a (3S)-3-hydroxyacyl-CoA + NAD(+) = a 3-oxoacyl-CoA + NADH + H(+). The catalysed reaction is (3S)-3-hydroxybutanoyl-CoA = (3R)-3-hydroxybutanoyl-CoA. It participates in lipid metabolism; fatty acid beta-oxidation. In terms of biological role, catalyzes the formation of a hydroxyacyl-CoA by addition of water on enoyl-CoA. Also exhibits 3-hydroxyacyl-CoA epimerase and 3-hydroxyacyl-CoA dehydrogenase activities. This is Fatty acid oxidation complex subunit alpha from Salmonella enteritidis PT4 (strain P125109).